Reading from the N-terminus, the 291-residue chain is E3 ubiquitin-protein ligase RZFP34 (291 aa).

The segment at 20-96 (IGSGHYGCSH…VQQNCSNCGV (77 aa)) adopts a CHY-type zinc-finger fold. Cysteine 27, histidine 29, cysteine 40, cysteine 41, cysteine 47, cysteine 50, histidine 51, histidine 66, cysteine 78, cysteine 81, cysteine 91, cysteine 94, cysteine 103, cysteine 106, histidine 119, cysteine 120, cysteine 123, cysteine 126, histidine 136, cysteine 137, cysteine 140, cysteine 143, histidine 152, and cysteine 154 together coordinate Zn(2+). Residues 98 to 162 (MGKYFCSKCK…QCVEGAMHHN (65 aa)) form a CTCHY-type zinc finger. An RING-type; atypical zinc finger spans residues 163–206 (CPVCFEYLFDSTRDITVLRCGHTMHLECTKDMGLHNRYTCPVCS). Serine 173 is modified (phosphoserine). Phosphothreonine is present on threonine 178. A Phosphoserine modification is found at serine 208. The segment at 271–291 (QRGSDSHSCSSGMPQVVGSTG) is disordered.

As to quaternary structure, interacts with SRK2D/2SNRK2.2, SRK2I/SNRK2.3 and SRK2E/SNRK2.6. In terms of processing, phosphorylated at Ser-173, Thr-178 and Ser-208 by SRK2E/SNRK2.6 in response to abscisic acid (ABA). Phosphorylation activates its E3 ubiquitin-protein ligase activity. Expressed in roots, leaves, and anthers and stigma of open flowers.

It localises to the nucleus. It is found in the cytoplasm. Its subcellular location is the endoplasmic reticulum. The enzyme catalyses S-ubiquitinyl-[E2 ubiquitin-conjugating enzyme]-L-cysteine + [acceptor protein]-L-lysine = [E2 ubiquitin-conjugating enzyme]-L-cysteine + N(6)-ubiquitinyl-[acceptor protein]-L-lysine.. It participates in protein modification; protein ubiquitination. Possesses E3 ubiquitin-protein ligase activity in vitro. Mediates mainly 'Lys-48'-linked polyubiquitination. Promotes abscisic acid (ABA)-induced stomatal closure, reactive oxygen species (ROS) production and drought tolerance. Involved in the regulation of stomatal aperture. The chain is E3 ubiquitin-protein ligase RZFP34 from Arabidopsis thaliana (Mouse-ear cress).